Consider the following 351-residue polypeptide: Photosystem II D2 protein (351 aa).

The chain crosses the membrane as a helical span at residues 39-59 (CSYLALGGWLTGTTFVTSWYT). A chlorophyll a-binding site is contributed by His116. Residues 123 to 139 (GFCLRQFEIARLVGIRP) form a helical membrane-spanning segment. Gln128 and Asn141 together coordinate pheophytin a. The helical transmembrane segment at 151 to 164 (VFVSVFLMYPLGQA) threads the bilayer. His196 lines the chlorophyll a pocket. Residues 206–226 (GALLCAIHGATVQNTLFEDGD) form a helical membrane-spanning segment. A plastoquinone is bound by residues His213 and Phe260. Residue His213 coordinates Fe cation. His267 contacts Fe cation. Residues 277 to 293 (GLWTSAFGIVGLALNLR) form a helical membrane-spanning segment.

The protein belongs to the reaction center PufL/M/PsbA/D family. As to quaternary structure, PSII is composed of 1 copy each of membrane proteins PsbA, PsbB, PsbC, PsbD, PsbE, PsbF, PsbH, PsbI, PsbJ, PsbK, PsbL, PsbM, PsbT, PsbX, PsbY, PsbZ, Psb30/Ycf12, at least 3 peripheral proteins of the oxygen-evolving complex and a large number of cofactors. It forms dimeric complexes. Requires The D1/D2 heterodimer binds P680, chlorophylls that are the primary electron donor of PSII, and subsequent electron acceptors. It shares a non-heme iron and each subunit binds pheophytin, quinone, additional chlorophylls, carotenoids and lipids. There is also a Cl(-1) ion associated with D1 and D2, which is required for oxygen evolution. The PSII complex binds additional chlorophylls, carotenoids and specific lipids. as cofactor.

The protein localises to the plastid. It localises to the chloroplast thylakoid membrane. It catalyses the reaction 2 a plastoquinone + 4 hnu + 2 H2O = 2 a plastoquinol + O2. Photosystem II (PSII) is a light-driven water:plastoquinone oxidoreductase that uses light energy to abstract electrons from H(2)O, generating O(2) and a proton gradient subsequently used for ATP formation. It consists of a core antenna complex that captures photons, and an electron transfer chain that converts photonic excitation into a charge separation. The D1/D2 (PsbA/PsbD) reaction center heterodimer binds P680, the primary electron donor of PSII as well as several subsequent electron acceptors. D2 is needed for assembly of a stable PSII complex. This Gracilaria tenuistipitata var. liui (Red alga) protein is Photosystem II D2 protein.